The sequence spans 387 residues: tRNA pseudouridine synthase B (387 aa).

The active-site Nucleophile is D43.

It belongs to the pseudouridine synthase TruB family. Type 1 subfamily.

The enzyme catalyses uridine(55) in tRNA = pseudouridine(55) in tRNA. Its function is as follows. Responsible for synthesis of pseudouridine from uracil-55 in the psi GC loop of transfer RNAs. This chain is tRNA pseudouridine synthase B, found in Bifidobacterium longum (strain DJO10A).